A 98-amino-acid polypeptide reads, in one-letter code: MSLVHMNIALAFTVALLGLLMYRSHLMSSLLCLEGMMLTLFIMGTIMILNTHFTLASMLPIILLVFAACEAAVGLSLLVMVSNTYGVDYVQNLNLLQC.

A run of 3 helical transmembrane segments spans residues 1 to 21 (MSLV…GLLM), 29 to 49 (SLLC…IMIL), and 61 to 81 (IILL…LVMV).

Belongs to the complex I subunit 4L family. As to quaternary structure, core subunit of respiratory chain NADH dehydrogenase (Complex I) which is composed of 45 different subunits.

It localises to the mitochondrion inner membrane. The catalysed reaction is a ubiquinone + NADH + 5 H(+)(in) = a ubiquinol + NAD(+) + 4 H(+)(out). In terms of biological role, core subunit of the mitochondrial membrane respiratory chain NADH dehydrogenase (Complex I) which catalyzes electron transfer from NADH through the respiratory chain, using ubiquinone as an electron acceptor. Part of the enzyme membrane arm which is embedded in the lipid bilayer and involved in proton translocation. This is NADH-ubiquinone oxidoreductase chain 4L (MT-ND4L) from Sorex unguiculatus (Long-clawed shrew).